The following is a 102-amino-acid chain: Large ribosomal subunit protein bL21 (102 aa).

This sequence belongs to the bacterial ribosomal protein bL21 family. As to quaternary structure, part of the 50S ribosomal subunit. Contacts protein L20.

This protein binds to 23S rRNA in the presence of protein L20. This Bifidobacterium animalis subsp. lactis (strain AD011) protein is Large ribosomal subunit protein bL21.